We begin with the raw amino-acid sequence, 294 residues long: Release factor glutamine methyltransferase (294 aa).

S-adenosyl-L-methionine contacts are provided by residues 131 to 135 (GTGSG), D154, and N202. 202–205 (NPPY) is a binding site for substrate.

The protein belongs to the protein N5-glutamine methyltransferase family. PrmC subfamily.

It carries out the reaction L-glutaminyl-[peptide chain release factor] + S-adenosyl-L-methionine = N(5)-methyl-L-glutaminyl-[peptide chain release factor] + S-adenosyl-L-homocysteine + H(+). Methylates the class 1 translation termination release factors RF1/PrfA and RF2/PrfB on the glutamine residue of the universally conserved GGQ motif. In Chlorobaculum tepidum (strain ATCC 49652 / DSM 12025 / NBRC 103806 / TLS) (Chlorobium tepidum), this protein is Release factor glutamine methyltransferase.